Here is a 330-residue protein sequence, read N- to C-terminus: Negative regulator of the PHO system (330 aa).

Positions phenylalanine 8–phenylalanine 290 constitute a Protein kinase domain. ATP contacts are provided by residues leucine 14–valine 22 and lysine 37. Aspartate 131 functions as the Proton acceptor in the catalytic mechanism. The disordered stretch occupies residues methionine 300–arginine 330. Residues glutamine 308–glutamine 323 show a composition bias toward low complexity.

This sequence belongs to the protein kinase superfamily. CMGC Ser/Thr protein kinase family. CDC2/CDKX subfamily. Interacts with a number of cyclins.

The enzyme catalyses L-seryl-[protein] + ATP = O-phospho-L-seryl-[protein] + ADP + H(+). The catalysed reaction is L-threonyl-[protein] + ATP = O-phospho-L-threonyl-[protein] + ADP + H(+). Functionally, when phosphate concentrations are high it phosphorylates the PHO4 transcription factor thus establishing repression. The protein is Negative regulator of the PHO system (PHO85) of Debaryomyces hansenii (strain ATCC 36239 / CBS 767 / BCRC 21394 / JCM 1990 / NBRC 0083 / IGC 2968) (Yeast).